The primary structure comprises 310 residues: Formimidoylglutamase (310 aa).

Residues H120, D148, H150, D152, D233, and D235 each coordinate Mn(2+).

Belongs to the arginase family. Mn(2+) is required as a cofactor.

The enzyme catalyses N-formimidoyl-L-glutamate + H2O = formamide + L-glutamate. It functions in the pathway amino-acid degradation; L-histidine degradation into L-glutamate; L-glutamate from N-formimidoyl-L-glutamate (hydrolase route): step 1/1. Catalyzes the conversion of N-formimidoyl-L-glutamate to L-glutamate and formamide. This chain is Formimidoylglutamase, found in Nocardia farcinica (strain IFM 10152).